The primary structure comprises 342 residues: Cytosolic Fe-S cluster assembly factor NBP35 (342 aa).

Cys33, Cys47, Cys50, and Cys56 together coordinate [4Fe-4S] cluster. 86–93 (GKGGVGKS) is a binding site for ATP. 2 residues coordinate [4Fe-4S] cluster: Cys259 and Cys262.

Belongs to the Mrp/NBP35 ATP-binding proteins family. NUBP1/NBP35 subfamily. As to quaternary structure, heterotetramer of 2 NBP35 and 2 CFD1 chains. [4Fe-4S] cluster serves as cofactor.

Its subcellular location is the cytoplasm. Its function is as follows. Component of the cytosolic iron-sulfur (Fe/S) protein assembly (CIA) machinery. Required for maturation of extramitochondrial Fe-S proteins. The NBP35-CFD1 heterotetramer forms a Fe-S scaffold complex, mediating the de novo assembly of an Fe-S cluster and its transfer to target apoproteins. In Gibberella zeae (strain ATCC MYA-4620 / CBS 123657 / FGSC 9075 / NRRL 31084 / PH-1) (Wheat head blight fungus), this protein is Cytosolic Fe-S cluster assembly factor NBP35.